Consider the following 119-residue polypeptide: Large ribosomal subunit protein bL20 (119 aa).

Belongs to the bacterial ribosomal protein bL20 family.

In terms of biological role, binds directly to 23S ribosomal RNA and is necessary for the in vitro assembly process of the 50S ribosomal subunit. It is not involved in the protein synthesizing functions of that subunit. The protein is Large ribosomal subunit protein bL20 of Levilactobacillus brevis (strain ATCC 367 / BCRC 12310 / CIP 105137 / JCM 1170 / LMG 11437 / NCIMB 947 / NCTC 947) (Lactobacillus brevis).